A 228-amino-acid chain; its full sequence is Geranylgeranylglyceryl phosphate synthase (228 aa).

Lys14 provides a ligand contact to sn-glycerol 1-phosphate. Positions 16 and 42 each coordinate Mg(2+). Sn-glycerol 1-phosphate is bound by residues 160-165 (YIEYSG), Gly190, and 210-211 (GN).

It belongs to the GGGP/HepGP synthase family. Group I subfamily. Requires Mg(2+) as cofactor.

Its subcellular location is the cytoplasm. The enzyme catalyses sn-glycerol 1-phosphate + (2E,6E,10E)-geranylgeranyl diphosphate = sn-3-O-(geranylgeranyl)glycerol 1-phosphate + diphosphate. Its pathway is membrane lipid metabolism; glycerophospholipid metabolism. In terms of biological role, prenyltransferase that catalyzes the transfer of the geranylgeranyl moiety of geranylgeranyl diphosphate (GGPP) to the C3 hydroxyl of sn-glycerol-1-phosphate (G1P). This reaction is the first ether-bond-formation step in the biosynthesis of archaeal membrane lipids. The polypeptide is Geranylgeranylglyceryl phosphate synthase (Methanocella arvoryzae (strain DSM 22066 / NBRC 105507 / MRE50)).